The primary structure comprises 200 residues: HTH-type transcriptional regulator BetI (200 aa).

The region spanning 8 to 68 (DIRKPQLVQA…ETMREILRQL (61 aa)) is the HTH tetR-type domain. A DNA-binding region (H-T-H motif) is located at residues 31–50 (SIALISKEAGVSTGIINHYF).

It participates in amine and polyamine biosynthesis; betaine biosynthesis via choline pathway [regulation]. In terms of biological role, repressor involved in the biosynthesis of the osmoprotectant glycine betaine. It represses transcription of the choline transporter BetT and the genes of BetAB involved in the synthesis of glycine betaine. The protein is HTH-type transcriptional regulator BetI of Vibrio atlanticus (strain LGP32) (Vibrio splendidus (strain Mel32)).